Reading from the N-terminus, the 884-residue chain is Cadherin-1 (884 aa).

The N-terminal stretch at 1–23 (MGARCRSFSALLLLLQVSSWLCQ) is a signal peptide. Residues 24 to 156 (ELEPESCSPG…VYPGLRRQKR (133 aa)) constitute a propeptide that is removed on maturation. Residues 119–139 (KSMGHHHHRHHHRDPASESNP) are disordered. Residues 121–131 (MGHHHHRHHHR) are compositionally biased toward basic residues. Cadherin domains lie at 157–264 (DWVI…RPEF), 265–377 (TQEV…APVF), 378–488 (NPST…APIF), 489–595 (MPAE…DNAP), and 596–699 (IPEP…NCMK). Residues 157–709 (DWVIPPISCP…AGIVAAGLQV (553 aa)) lie on the Extracellular side of the membrane. D259 contacts Ca(2+). S282 and S287 each carry an O-linked (Man...) serine glycan. A Ca(2+)-binding site is contributed by D290. T360, T472, T474, and T511 each carry an O-linked (Man...) threonine glycan. N560 is a glycosylation site (N-linked (GlcNAc...) asparagine). O-linked (Man...) threonine glycosylation is found at T578, T580, and T582. An N-linked (GlcNAc...) asparagine glycan is attached at N639. A helical transmembrane segment spans residues 710 to 733 (PAILGILGGILALLILILLLLLFL). The Cytoplasmic portion of the chain corresponds to 734–884 (RRRTVVKEPL…ADMYGGGEDD (151 aa)). Residues 749-808 (DTRDNVYYYDEEGGGEEDQDFDLSQLHRGLDARPEVTRNDVAPTLMSVPQYRPRPANPDE) are disordered. A phosphotyrosine; by SRC mark is found at Y755, Y756, and Y757. A compositionally biased stretch (acidic residues) spans 757–769 (YDEEGGGEEDQDF). Positions 760 to 771 (EGGGEEDQDFDL) are required for binding CTNND1 and PSEN1. S772 bears the Phosphoserine mark. Over residues 776–786 (RGLDARPEVTR) the composition is skewed to basic and acidic residues. A phosphoserine mark is found at S795, S840, S842, and S848. Positions 813-884 (IDENLKAADS…ADMYGGGEDD (72 aa)) are required for binding alpha, beta and gamma catenins.

In terms of assembly, homodimer; disulfide-linked. Component of an E-cadherin/ catenin adhesion complex composed of at least E-cadherin/CDH1, beta-catenin/CTNNB1 or gamma-catenin/JUP, and potentially alpha-catenin/CTNNA1; the complex is located to adherens junctions. Found in a complex composed of CDH1, RAP1A and PKP3; PKP3 acts as a scaffold protein within the complex, the complex is required for CDH1 localization to mature desmosome cell junctions. Interacts with the TRPV4 and CTNNB1 complex. Interacts with CTNND1. The stable association of CTNNA1 is controversial as CTNNA1 was shown not to bind to F-actin when assembled in the complex. Alternatively, the CTNNA1-containing complex may be linked to F-actin by other proteins such as LIMA1. Interaction with PSEN1, cleaves CDH1 resulting in the disassociation of cadherin-based adherens junctions (CAJs). Interacts with AJAP1 and DLGAP5. Interacts with TBC1D2. Interacts with LIMA1. Interacts with CAV1. Interacts with PIP5K1C. Interacts with RAB8B. Interacts with DDR1; this stabilizes CDH1 at the cell surface and inhibits its internalization. Interacts with RAPGEF2. Interacts with KLRG1. Forms a ternary complex composed of ADAM10, CADH1 and EPHA4; within the complex, CADH1 is cleaved by ADAM10 which disrupts adherens junctions. Interacts with SPEF1. Interacts with CTNNB1 and PKP2. Interacts with AMOTL2; the interaction may facilitate binding of radial actin fibers to cell junction complexes. Interacts with DSG3; the interaction is required for CDH1 localization to developing adherens junctions. Post-translationally, during apoptosis or with calcium influx, cleaved by a membrane-bound metalloproteinase (ADAM10), PS1/gamma-secretase and caspase-3. Processing by the metalloproteinase, induced by calcium influx, causes disruption of cell-cell adhesion and the subsequent release of beta-catenin into the cytoplasm. The residual membrane-tethered cleavage product is rapidly degraded via an intracellular proteolytic pathway. Cleavage by caspase-3 releases the cytoplasmic tail resulting in disintegration of the actin microfilament system. The gamma-secretase-mediated cleavage promotes disassembly of adherens junctions. During development of the cochlear organ of Corti, cleavage by ADAM10 at adherens junctions promotes pillar cell separation. O-glycosylated. O-manosylated by TMTC1, TMTC2, TMTC3 or TMTC4. Ser-287 and Thr-511 are O-manosylated by TMTC2 or TMTC4 but not TMTC1 or TMTC3. In terms of processing, N-glycosylation at Asn-639 is essential for expression, folding and trafficking. Addition of bisecting N-acetylglucosamine by MGAT3 modulates its cell membrane location. Post-translationally, ubiquitinated by a SCF complex containing SKP2, which requires prior phosphorylation by CK1/CSNK1A1. Ubiquitinated by CBLL1/HAKAI, requires prior phosphorylation at Tyr-756. Expressed in inner and outer pillar cells of the organ of Corti (at protein level). Expressed in granuloma macrophages (at protein level). Expressed in the epidermal keratinocytes of the skin from birth (at protein level). Expressed in non-neural epithelial tissues.

It is found in the cell junction. Its subcellular location is the adherens junction. It localises to the cell membrane. The protein resides in the endosome. The protein localises to the golgi apparatus. It is found in the trans-Golgi network. Its subcellular location is the cytoplasm. It localises to the desmosome. Its function is as follows. Cadherins are calcium-dependent cell adhesion proteins. They preferentially interact with themselves in a homophilic manner in connecting cells; cadherins may thus contribute to the sorting of heterogeneous cell types. CDH1 is involved in mechanisms regulating cell-cell adhesions, mobility and proliferation of epithelial cells. Promotes organization of radial actin fiber structure and cellular response to contractile forces, via its interaction with AMOTL2 which facilitates anchoring of radial actin fibers to CDH1 junction complexes at the cell membrane. Plays a role in the early stages of desmosome cell-cell junction formation via facilitating the recruitment of DSG2 and DSP to desmosome plaques. Has a potent invasive suppressor role. It is a ligand for integrin alpha-E/beta-7. Functionally, E-Cad/CTF2 promotes non-amyloidogenic degradation of Abeta precursors. Has a strong inhibitory effect on APP C99 and C83 production. (Microbial infection) Does not function as a receptor for L.monocytogenes internalin A (InlA); mutating a single surface-exposed residue confers receptor activity to this protein and promotes uptake of the bacteria. The polypeptide is Cadherin-1 (Cdh1) (Mus musculus (Mouse)).